Consider the following 193-residue polypeptide: NADH-quinone oxidoreductase subunit B (193 aa).

C72, C73, C137, and C167 together coordinate [4Fe-4S] cluster.

Belongs to the complex I 20 kDa subunit family. NDH-1 is composed of 14 different subunits. Subunits NuoB, C, D, E, F, and G constitute the peripheral sector of the complex. It depends on [4Fe-4S] cluster as a cofactor.

The protein localises to the cell inner membrane. It carries out the reaction a quinone + NADH + 5 H(+)(in) = a quinol + NAD(+) + 4 H(+)(out). Functionally, NDH-1 shuttles electrons from NADH, via FMN and iron-sulfur (Fe-S) centers, to quinones in the respiratory chain. The immediate electron acceptor for the enzyme in this species is believed to be ubiquinone. Couples the redox reaction to proton translocation (for every two electrons transferred, four hydrogen ions are translocated across the cytoplasmic membrane), and thus conserves the redox energy in a proton gradient. In Bradyrhizobium sp. (strain ORS 278), this protein is NADH-quinone oxidoreductase subunit B.